We begin with the raw amino-acid sequence, 185 residues long: Pyruvate/ketoisovalerate oxidoreductases common subunit gamma (185 aa).

As to quaternary structure, heterotetramer of one alpha, one beta, one delta and one gamma chain.

The catalysed reaction is 2 oxidized [2Fe-2S]-[ferredoxin] + pyruvate + CoA = 2 reduced [2Fe-2S]-[ferredoxin] + acetyl-CoA + CO2 + H(+). It catalyses the reaction 3-methyl-2-oxobutanoate + 2 oxidized [2Fe-2S]-[ferredoxin] + CoA = 2-methylpropanoyl-CoA + 2 reduced [2Fe-2S]-[ferredoxin] + CO2 + H(+). This is Pyruvate/ketoisovalerate oxidoreductases common subunit gamma (porG) from Thermococcus kodakarensis (strain ATCC BAA-918 / JCM 12380 / KOD1) (Pyrococcus kodakaraensis (strain KOD1)).